We begin with the raw amino-acid sequence, 396 residues long: Phosphoglycerate kinase (396 aa).

Residues Asp21–Asn23, Arg36, His59–Lys62, Arg119, and Arg156 each bind substrate. ATP is bound by residues Lys206, Gly294, Glu325, and Gly352–Ser355.

The protein belongs to the phosphoglycerate kinase family. Monomer.

The protein resides in the cytoplasm. The catalysed reaction is (2R)-3-phosphoglycerate + ATP = (2R)-3-phospho-glyceroyl phosphate + ADP. Its pathway is carbohydrate degradation; glycolysis; pyruvate from D-glyceraldehyde 3-phosphate: step 2/5. In Listeria monocytogenes serotype 4a (strain HCC23), this protein is Phosphoglycerate kinase.